The chain runs to 321 residues: Epoxyqueuosine reductase (321 aa).

Residue D137 is the Proton donor of the active site. In terms of domain architecture, 4Fe-4S ferredoxin-type spans 179-211 (EPLNADPPARSLCGRCSACIDACPTHAIREPFV). Residues C191, C194, C197, C201, C217, C245, C248, and C252 each coordinate [4Fe-4S] cluster.

It belongs to the QueG family. In terms of assembly, monomer. Requires cob(II)alamin as cofactor. The cofactor is [4Fe-4S] cluster.

Its subcellular location is the cytoplasm. It carries out the reaction epoxyqueuosine(34) in tRNA + AH2 = queuosine(34) in tRNA + A + H2O. It participates in tRNA modification; tRNA-queuosine biosynthesis. Functionally, catalyzes the conversion of epoxyqueuosine (oQ) to queuosine (Q), which is a hypermodified base found in the wobble positions of tRNA(Asp), tRNA(Asn), tRNA(His) and tRNA(Tyr). The chain is Epoxyqueuosine reductase from Synechococcus sp. (strain CC9605).